The following is a 110-amino-acid chain: Endoribonuclease SymE (110 aa).

The SpoVT-AbrB domain occupies 29–74 (SRYPDYTRIPALTMKGQWLEAAGFATGTEVDVRVMNGCIVLTAQQP).

This sequence belongs to the SymE family.

Its subcellular location is the cytoplasm. In terms of biological role, involved in the degradation and recycling of damaged RNA. It is itself a target for degradation by the ATP-dependent protease Lon. The polypeptide is Endoribonuclease SymE (Salmonella typhi).